The sequence spans 555 residues: Neutral amino acid transporter B(0) (555 aa).

M1 is subject to N-acetylmethionine. Residues 1–52 are Cytoplasmic-facing; the sequence is MAVDPPKADPKGVVAVDPTANCGSGLKSREDQGAKAGGCCSSRDQVCRCLRA. A helical transmembrane segment spans residues 53-82; the sequence is NLLVLLTVAAAVAGVVLGLGVSAAGGAEAL. The Extracellular portion of the chain corresponds to 83 to 95; sequence GHARFTAFAFPGE. The chain crosses the membrane as a helical span at residues 96 to 117; sequence LLLRLLEMIILPLVVCSLIGGA. The Cytoplasmic segment spans residues 118–131; the sequence is ASLDPSALGRLGAW. Residues 132-154 form a helical membrane-spanning segment; sequence ALLFFLVTTLLSSALGVALALAL. The Extracellular segment spans residues 155–239; that stretch reads KPGAAFAAIN…SNATMDQPHC (85 aa). 2 N-linked (GlcNAc...) asparagine glycosylation sites follow: N164 and N231. A helical transmembrane segment spans residues 240-262; the sequence is EMKMNILGLVVFAIVFGVALRKL. Topologically, residues 263–271 are cytoplasmic; it reads GPEGELLIR. Residues 272–299 form a helical membrane-spanning segment; sequence FFNSFNDATMVLVSWIMWYAPIGILFLV. Topologically, residues 300 to 320 are extracellular; that stretch reads AGKIVEMKDIRQLFIGLGKYI. A helical membrane pass occupies residues 321-342; it reads VCCLLGHAIHGLLVLPLIYFLF. Residues 343–347 are Cytoplasmic-facing; that stretch reads TRKNP. Residues 348-378 constitute an intramembrane region (discontinuously helical); sequence YRFLWGIVTPLATAFGTSSSSATLPLMMKCV. The Cytoplasmic portion of the chain corresponds to 379–387; sequence EEKNGVAKH. A helical transmembrane segment spans residues 388-414; the sequence is ISRFILPIGATVNMDGAALFQCVAAVF. G396, T398, and N400 together coordinate Na(+). The Extracellular portion of the chain corresponds to 415-427; the sequence is IAQLNGMSLDFVK. Positions 428–461 form an intramembrane region, discontinuously helical; sequence IITILVTATASSVGAAGIPAGGVLTLAIILEAIS. Residues 462–474 lie on the Extracellular side of the membrane; sequence LPVKDISLILAVD. A helical transmembrane segment spans residues 475–496; the sequence is WLVDRSCTVLNVEGDAFGAGLL. The Na(+) site is built by N485 and D489. Residues 497–555 are Cytoplasmic-facing; sequence QSYVDRTKMPSSEPELIQVKNDVSLKPLPLATEEGNPLLKQCREPSGDSSATCEKESVM. S507, S508, S520, S545, and S553 each carry phosphoserine. The interval 534–555 is disordered; the sequence is LLKQCREPSGDSSATCEKESVM.

Belongs to the dicarboxylate/amino acid:cation symporter (DAACS) (TC 2.A.23) family. In terms of assembly, homotrimer.

The protein localises to the cell membrane. The protein resides in the melanosome. The enzyme catalyses L-glutamine(out) + L-serine(in) + Na(+)(out) = L-glutamine(in) + L-serine(out) + Na(+)(in). It catalyses the reaction L-glutamine(in) + L-serine(out) + Na(+)(out) = L-glutamine(out) + L-serine(in) + Na(+)(in). The catalysed reaction is L-threonine(in) + L-glutamine(out) + Na(+)(out) = L-threonine(out) + L-glutamine(in) + Na(+)(in). It carries out the reaction L-threonine(out) + L-glutamine(in) + Na(+)(out) = L-threonine(in) + L-glutamine(out) + Na(+)(in). The enzyme catalyses L-asparagine(in) + L-glutamine(out) + Na(+)(out) = L-asparagine(out) + L-glutamine(in) + Na(+)(in). It catalyses the reaction L-asparagine(out) + L-glutamine(in) + Na(+)(out) = L-asparagine(in) + L-glutamine(out) + Na(+)(in). The catalysed reaction is L-glutamine(in) + L-alanine(out) + Na(+)(out) = L-glutamine(out) + L-alanine(in) + Na(+)(in). It carries out the reaction L-valine(out) + L-glutamine(in) + Na(+)(out) = L-valine(in) + L-glutamine(out) + Na(+)(in). The enzyme catalyses L-glutamine(in) + L-methionine(out) + Na(+)(out) = L-glutamine(out) + L-methionine(in) + Na(+)(in). It catalyses the reaction L-glutamine(in) + L-glutamate(out) + Na(+)(out) + H(+)(out) = L-glutamine(out) + L-glutamate(in) + Na(+)(in) + H(+)(in). The catalysed reaction is D-serine(in) + L-glutamine(out) + Na(+)(out) = D-serine(out) + L-glutamine(in) + Na(+)(in). It carries out the reaction D-serine(in) + L-alanine(out) + Na(+)(out) = D-serine(out) + L-alanine(in) + Na(+)(in). The enzyme catalyses nitrate(in) = nitrate(out). It catalyses the reaction iodide(out) = iodide(in). The catalysed reaction is thiocyanate(in) = thiocyanate(out). With respect to regulation, down-regulated at acidic pH. In terms of biological role, sodium-coupled antiporter of neutral amino acids. In a tri-substrate transport cycle, exchanges neutral amino acids between the extracellular and intracellular compartments, coupled to the inward cotransport of at least one sodium ion. The preferred substrate is the essential amino acid L-glutamine, a precursor for biosynthesis of proteins, nucleotides and amine sugars as well as an alternative fuel for mitochondrial oxidative phosphorylation. Exchanges L-glutamine with other neutral amino acids such as L-serine, L-threonine and L-asparagine in a bidirectional way. Provides L-glutamine to proliferating stem and activated cells driving the metabolic switch toward cell differentiation. The transport cycle is usually pH-independent, with the exception of L-glutamate. Transports extracellular L-glutamate coupled to the cotransport of one proton and one sodium ion in exchange for intracellular L-glutamine counter-ion. May provide for L-glutamate uptake in glial cells regulating glutamine/glutamate cycle in the nervous system. Can transport D-amino acids. Mediates D-serine release from the retinal glia potentially affecting NMDA receptor function in retinal neurons. Displays sodium- and amino acid-dependent but uncoupled channel-like anion conductance with a preference SCN(-) &gt;&gt; NO3(-) &gt; I(-) &gt; Cl(-). Through binding of the fusogenic protein syncytin-1/ERVW-1 may mediate trophoblasts syncytialization, the spontaneous fusion of their plasma membranes, an essential process in placental development. This Rattus norvegicus (Rat) protein is Neutral amino acid transporter B(0) (Slc1a5).